Consider the following 130-residue polypeptide: Lipoprotein LpqS (130 aa).

The N-terminal stretch at 1–23 is a signal peptide; it reads MVWMRSAIVAVALGVTVAAVAAA. Cys-24 is lipidated: N-palmitoyl cysteine. The S-diacylglycerol cysteine moiety is linked to residue Cys-24.

The protein resides in the cell membrane. Its function is as follows. May play an essential role in M.tuberculosis replication and survival inside the host cell. The polypeptide is Lipoprotein LpqS (Mycobacterium tuberculosis (strain ATCC 25618 / H37Rv)).